Reading from the N-terminus, the 608-residue chain is X-ray repair cross-complementing protein 6 (608 aa).

The segment covering 1–11 has biased composition (basic and acidic residues); that stretch reads MSEWESYYKTE. A disordered region spans residues 1 to 29; that stretch reads MSEWESYYKTEGEEEEEEEESPDTGGEYK. An N-acetylserine modification is found at S2. S2 is subject to Phosphoserine. S6 carries the phosphoserine; by PRKDC modification. A compositionally biased stretch (acidic residues) spans 12 to 22; that stretch reads GEEEEEEEESP. K29 acts as the Schiff-base intermediate with DNA; for 5'-deoxyribose-5-phosphate lyase activity in catalysis. Residue K29 is modified to N6-acetyllysine. S49 bears the Phosphoserine; by PRKDC mark. Residues 259 to 466 form the Ku domain; sequence FKLGEDVVLM…IDKMKAIVQK (208 aa). The DNA-binding stretch occupies residues 275-339; the sequence is VQKANKPFPV…EETEELKRFD (65 aa). K315 is covalently cross-linked (Glycyl lysine isopeptide (Lys-Gly) (interchain with G-Cter in SUMO2)). An N6-acetyllysine mark is found at K329, K336, and K459. The tract at residues 371–480 is interaction with XRCC5; the sequence is SLVSGSSTLF…YRSDSFENPV (110 aa). S475, S518, and S548 each carry phosphoserine. The tract at residues 534 to 557 is disordered; that stretch reads PEGKVAKRKQDDEGSTSKKPKVEL. The segment covering 537–557 has biased composition (basic and acidic residues); sequence KVAKRKQDDEGSTSKKPKVEL. An interaction with DEAF1 region spans residues 548 to 607; that stretch reads STSKKPKVELSEEELKAHFRKGTLGKLTVPTLKDICKAHGLKSGPKKQELLDALIRHLEK. A Glycyl lysine isopeptide (Lys-Gly) (interchain with G-Cter in SUMO2) cross-link involves residue K554. S558 is modified (phosphoserine). The residue at position 568 (K568) is an N6,N6,N6-trimethyllysine. The region spanning 571–605 is the SAP domain; that stretch reads LGKLTVPTLKDICKAHGLKSGPKKQELLDALIRHL. The tract at residues 576–581 is interaction with BAX; it reads VPTLKD.

This sequence belongs to the ku70 family. Heterodimer composed of XRCC5/Ku80 and XRCC6/Ku70. Component of the core long-range non-homologous end joining (NHEJ) complex (also named DNA-PK complex) composed of PRKDC, LIG4, XRCC4, XRCC6/Ku70, XRCC5/Ku86 and NHEJ1/XLF. Additional component of the NHEJ complex includes PAXX. Following autophosphorylation, PRKDC dissociates from DNA, leading to formation of the short-range NHEJ complex, composed of LIG4, XRCC4, XRCC6/Ku70, XRCC5/Ku86 and NHEJ1/XLF. The XRCC5-XRCC6 dimer also associates with NAA15, and this complex binds to the osteocalcin promoter and activates osteocalcin expression. In addition, XRCC6 interacts with the osteoblast-specific transcription factors MSX2, RUNX2 and DLX5. Interacts with ELF3. Interacts with ATP23. The XRCC5-XRRC6 dimer associates in a DNA-dependent manner with APEX1. Binds to CDK9. Identified in a complex with DEAF1 and XRCC5. Interacts with DEAF1 (via the SAND domain); the interaction is direct and may be inhibited by DNA-binding. Interacts with CLU. Interacts with NR4A3; the DNA-dependent protein kinase complex DNA-PK phosphorylates and activates NR4A3 and prevents NR4A3 ubiquitinylation and degradation. Interacts with CYREN (via KBM motif). Interacts (via N-terminus) with HSF1 (via N-terminus); this interaction is direct and prevents XRCC5/XRCC6 heterodimeric binding and non-homologous end joining (NHEJ) repair activities induced by ionizing radiation (IR). Part of the HDP-RNP complex composed of at least HEXIM1, PRKDC, XRCC5, XRCC6, paraspeckle proteins (SFPQ, NONO, PSPC1, RBM14, and MATR3) and NEAT1 RNA. Interacts with HMBOX1. Interacts with ATF7. Interacts with APLF (via KBM motif). Interacts with WRN (via KBM motif). The XRCC5-XRCC6 dimer associates with ALKBH2. Interacts with TPRN; TPRN interacts with a number of DNA damage response proteins, is recruited to sites of DNA damage and may play a role in DNA damage repair. When not acetylated, interacts with BAX. Interacts with ERCC6L2. Phosphorylation by PRKDC may enhance helicase activity. Phosphorylation of Ser-49 does not affect DNA repair. Post-translationally, ADP-ribosylated by PARP3. In terms of processing, methylation by SETD4 leads to accumulation in the cytoplasm and is a prerequisite for acetylation, possibly due to the change of subcellular from the nucleus to the cytosol initiated by methylation, acetylation occurring in the cytosol. Acetylation can be catalyzed in vitro by CREBBP/CBP and KAT2B/PCAF.

The protein resides in the nucleus. It is found in the chromosome. Its subcellular location is the cytoplasm. Its function is as follows. Single-stranded DNA-dependent ATP-dependent helicase that plays a key role in DNA non-homologous end joining (NHEJ) by recruiting DNA-PK to DNA. Required for double-strand break repair and V(D)J recombination. Also has a role in chromosome translocation. Has a role in chromosome translocation. The DNA helicase II complex binds preferentially to fork-like ends of double-stranded DNA in a cell cycle-dependent manner. It works in the 3'-5' direction. During NHEJ, the XRCC5-XRRC6 dimer performs the recognition step: it recognizes and binds to the broken ends of the DNA and protects them from further resection. Binding to DNA may be mediated by XRCC6. The XRCC5-XRRC6 dimer acts as a regulatory subunit of the DNA-dependent protein kinase complex DNA-PK by increasing the affinity of the catalytic subunit PRKDC to DNA by 100-fold. The XRCC5-XRRC6 dimer is probably involved in stabilizing broken DNA ends and bringing them together. The assembly of the DNA-PK complex to DNA ends is required for the NHEJ ligation step. Probably also acts as a 5'-deoxyribose-5-phosphate lyase (5'-dRP lyase), by catalyzing the beta-elimination of the 5' deoxyribose-5-phosphate at an abasic site near double-strand breaks. 5'-dRP lyase activity allows to 'clean' the termini of abasic sites, a class of nucleotide damage commonly associated with strand breaks, before such broken ends can be joined. The XRCC5-XRRC6 dimer together with APEX1 acts as a negative regulator of transcription. In association with NAA15, the XRCC5-XRRC6 dimer binds to the osteocalcin promoter and activates osteocalcin expression. Plays a role in the regulation of DNA virus-mediated innate immune response by assembling into the HDP-RNP complex, a complex that serves as a platform for IRF3 phosphorylation and subsequent innate immune response activation through the cGAS-STING pathway. Negatively regulates apoptosis by interacting with BAX and sequestering it from the mitochondria. Might have deubiquitination activity, acting on BAX. The protein is X-ray repair cross-complementing protein 6 (Xrcc6) of Mus musculus (Mouse).